A 270-amino-acid polypeptide reads, in one-letter code: Putative carbamate hydrolase RutD (270 aa).

Belongs to the AB hydrolase superfamily. Hydrolase RutD family.

It catalyses the reaction carbamate + 2 H(+) = NH4(+) + CO2. Its function is as follows. Involved in pyrimidine catabolism. May facilitate the hydrolysis of carbamate, a reaction that can also occur spontaneously. In Escherichia coli O44:H18 (strain 042 / EAEC), this protein is Putative carbamate hydrolase RutD.